A 138-amino-acid chain; its full sequence is Cysteine desulfuration protein SufE (138 aa).

Residue Cys-51 is the Cysteine persulfide intermediate of the active site.

Belongs to the SufE family. In terms of assembly, homodimer. Interacts with SufS.

The protein resides in the cytoplasm. It functions in the pathway cofactor biosynthesis; iron-sulfur cluster biosynthesis. Functionally, participates in cysteine desulfuration mediated by SufS. Cysteine desulfuration mobilizes sulfur from L-cysteine to yield L-alanine and constitutes an essential step in sulfur metabolism for biosynthesis of a variety of sulfur-containing biomolecules. Functions as a sulfur acceptor for SufS, by mediating the direct transfer of the sulfur atom from the S-sulfanylcysteine of SufS, an intermediate product of cysteine desulfuration process. The protein is Cysteine desulfuration protein SufE of Citrobacter koseri (strain ATCC BAA-895 / CDC 4225-83 / SGSC4696).